The primary structure comprises 233 residues: Probable septum site-determining protein MinC (233 aa).

Residues 98–123 (LTEGKEKAPRPAPSEPTPPPPPVANQ) form a disordered region. Positions 107–120 (RPAPSEPTPPPPPV) are enriched in pro residues.

It belongs to the MinC family. As to quaternary structure, interacts with MinD and FtsZ.

Functionally, cell division inhibitor that blocks the formation of polar Z ring septums. Rapidly oscillates between the poles of the cell to destabilize FtsZ filaments that have formed before they mature into polar Z rings. Prevents FtsZ polymerization. This chain is Probable septum site-determining protein MinC, found in Klebsiella pneumoniae (strain 342).